The sequence spans 205 residues: ATP phosphoribosyltransferase (205 aa).

The protein belongs to the ATP phosphoribosyltransferase family. Short subfamily. As to quaternary structure, heteromultimer composed of HisG and HisZ subunits.

It localises to the cytoplasm. The enzyme catalyses 1-(5-phospho-beta-D-ribosyl)-ATP + diphosphate = 5-phospho-alpha-D-ribose 1-diphosphate + ATP. It participates in amino-acid biosynthesis; L-histidine biosynthesis; L-histidine from 5-phospho-alpha-D-ribose 1-diphosphate: step 1/9. Its function is as follows. Catalyzes the condensation of ATP and 5-phosphoribose 1-diphosphate to form N'-(5'-phosphoribosyl)-ATP (PR-ATP). Has a crucial role in the pathway because the rate of histidine biosynthesis seems to be controlled primarily by regulation of HisG enzymatic activity. This Leptospira borgpetersenii serovar Hardjo-bovis (strain JB197) protein is ATP phosphoribosyltransferase.